The following is a 265-amino-acid chain: MSESALEEVAALSAIYCRDGECEVLSSSVNGITVMIQTGVQGITGSEIHLKLIFDLPVEYPSSLPNISVSSEELTRAQRKDLRDKLVEQAKQHILEPMIHDLVVWTQQNLNNLIVQPEPSILEGHFPLSLDTITEETTWTILLRLDHMRAKSKYVKTVEKWTNDLKLCGRLMFLGKLILILLQGDRKSTRDYLVLQKTCKVDVDSSGKKCKEKMISVLCETILPLKQKRFTTFEVKEYSSVSDLQKEFEAAGLQTIFSEFVQALF.

In terms of domain architecture, RWD spans 7–114; that stretch reads EEVAALSAIY…WTQQNLNNLI (108 aa).

It is found in the nucleus. It localises to the cytoplasm. Its function is as follows. Enhancer of SUMO conjugation. Increases SUMO conjugation to proteins by promoting the: binding of E1 and E2 enzymes, thioester linkage between SUMO and ube2i/ubc9 and transfer of SUMO to specific target proteins which include hif1a, pias, nfkbia, nr3c1 and top1. Has no effect on ubiquitination. This Xenopus tropicalis (Western clawed frog) protein is RWD domain-containing protein 3 (rwdd3).